The sequence spans 327 residues: Phenylalanine--tRNA ligase alpha subunit (327 aa).

Glu252 lines the Mg(2+) pocket.

Belongs to the class-II aminoacyl-tRNA synthetase family. Phe-tRNA synthetase alpha subunit type 1 subfamily. In terms of assembly, tetramer of two alpha and two beta subunits. The cofactor is Mg(2+).

It localises to the cytoplasm. It catalyses the reaction tRNA(Phe) + L-phenylalanine + ATP = L-phenylalanyl-tRNA(Phe) + AMP + diphosphate + H(+). This is Phenylalanine--tRNA ligase alpha subunit from Yersinia pseudotuberculosis serotype O:1b (strain IP 31758).